The sequence spans 317 residues: Acetyl-coenzyme A carboxylase carboxyl transferase subunit alpha (317 aa).

Positions 39–293 constitute a CoA carboxyltransferase C-terminal domain; that stretch reads RLESRVNDAM…GDVIAKALAD (255 aa).

The protein belongs to the AccA family. As to quaternary structure, acetyl-CoA carboxylase is a heterohexamer composed of biotin carboxyl carrier protein (AccB), biotin carboxylase (AccC) and two subunits each of ACCase subunit alpha (AccA) and ACCase subunit beta (AccD).

The protein resides in the cytoplasm. It catalyses the reaction N(6)-carboxybiotinyl-L-lysyl-[protein] + acetyl-CoA = N(6)-biotinyl-L-lysyl-[protein] + malonyl-CoA. It participates in lipid metabolism; malonyl-CoA biosynthesis; malonyl-CoA from acetyl-CoA: step 1/1. Its function is as follows. Component of the acetyl coenzyme A carboxylase (ACC) complex. First, biotin carboxylase catalyzes the carboxylation of biotin on its carrier protein (BCCP) and then the CO(2) group is transferred by the carboxyltransferase to acetyl-CoA to form malonyl-CoA. In Agrobacterium fabrum (strain C58 / ATCC 33970) (Agrobacterium tumefaciens (strain C58)), this protein is Acetyl-coenzyme A carboxylase carboxyl transferase subunit alpha.